Consider the following 548-residue polypeptide: Alpha-1,3-mannosyl-glycoprotein 4-beta-N-acetylglucosaminyltransferase B (548 aa).

The Cytoplasmic portion of the chain corresponds to Met-1–Thr-7. Residues Phe-8 to Leu-28 traverse the membrane as a helical; Signal-anchor for type II membrane protein segment. The Lumenal segment spans residues Ser-29–Asp-548. Residues Val-36–Asp-83 adopt a coiled-coil conformation. N-linked (GlcNAc...) asparagine glycans are attached at residues Asn-87 and Asn-103.

The protein belongs to the glycosyltransferase 54 family. Interacts with SLC35A3. A divalent metal cation is required as a cofactor. N-glycosylated. In terms of tissue distribution, widely expressed. Strongly overexpressed in pancreatic cancer.

Its subcellular location is the golgi apparatus membrane. The enzyme catalyses an N(4)-{beta-D-GlcNAc-(1-&gt;2)-alpha-D-Man-(1-&gt;3)-[alpha-D-Man-(1-&gt;6)]-beta-D-Man-(1-&gt;4)-beta-D-GlcNAc-(1-&gt;4)-beta-D-GlcNAc}-L-asparaginyl-[protein] + UDP-N-acetyl-alpha-D-glucosamine = an N(4)-{beta-D-GlcNAc-(1-&gt;2)-[beta-D-GlcNAc-(1-&gt;4)]-alpha-D-Man-(1-&gt;3)-[alpha-D-Man-(1-&gt;6)]-beta-D-Man-(1-&gt;4)-beta-D-GlcNAc-(1-&gt;4)-beta-D-GlcNAc}-L-asparaginyl-[protein] + UDP + H(+). It catalyses the reaction N(4)-{beta-D-GlcNAc-(1-&gt;2)-alpha-D-Man-(1-&gt;3)-[beta-D-GlcNAc-(1-&gt;2)-alpha-D-Man-(1-&gt;6)]-beta-D-Man-(1-&gt;4)-beta-D-GlcNAc-(1-&gt;4)-beta-D-GlcNAc}-L-asparaginyl-[protein] + UDP-N-acetyl-alpha-D-glucosamine = N(4)-{beta-D-GlcNAc-(1-&gt;2)-[beta-D-GlcNAc-(1-&gt;4)]-alpha-D-Man-(1-&gt;3)-[beta-D-GlcNAc-(1-&gt;2)-alpha-D-Man-(1-&gt;6)]-beta-D-Man-(1-&gt;4)-beta-D-GlcNAc-(1-&gt;4)-beta-D-GlcNAc}-L-asparaginyl-[protein] + UDP + H(+). The catalysed reaction is an N(4)-{beta-D-GlcNAc-(1-&gt;2)-alpha-D-Man-(1-&gt;3)-[beta-D-GlcNAc-(1-&gt;2)-[beta-D-GlcNAc-(1-&gt;6)]-alpha-D-Man-(1-&gt;6)]-beta-D-Man-(1-&gt;4)-beta-D-GlcNAc-(1-&gt;4)-beta-D-GlcNAc}-L-asparaginyl-[protein] + UDP-N-acetyl-alpha-D-glucosamine = an N(4)-{beta-D-GlcNAc-(1-&gt;2)-[beta-D-GlcNAc-(1-&gt;4)]-alpha-D-Man-(1-&gt;3)-[beta-D-GlcNAc-(1-&gt;2)-[beta-D-GlcNAc-(1-&gt;6)]-alpha-D-Man-(1-&gt;6)]-beta-D-Man-(1-&gt;4)-beta-D-GlcNAc-(1-&gt;4)-beta-D-GlcNAc}-L-asparaginyl-[protein] + UDP + H(+). It carries out the reaction an N(4)-{beta-D-GlcNAc-(1-&gt;2)-alpha-D-Man-(1-&gt;3)-[beta-D-GlcNAc-(1-&gt;2)-alpha-D-Man-(1-&gt;6)]-beta-D-Man-(1-&gt;4)-beta-D-GlcNAc-(1-&gt;4)-[alpha-L-Fuc-(1-&gt;6)]-beta-D-GlcNAc}-L-asparaginyl-[protein] + UDP-N-acetyl-alpha-D-glucosamine = N(4)-{beta-D-GlcNAc-(1-&gt;2)-[beta-D-GlcNAc-(1-&gt;4)]-alpha-D-Man-(1-&gt;3)-[beta-D-GlcNAc-(1-&gt;2)-alpha-D-Man-(1-&gt;6)]-beta-D-Man-(1-&gt;4)-beta-D-GlcNAc-(1-&gt;4)-[alpha-L-Fuc-(1-&gt;6)]-beta-D-GlcNAc}-asparaginyl-[protein] + UDP + H(+). The enzyme catalyses an N(4)-{beta-D-GlcNAc-(1-&gt;2)-alpha-D-Man-(1-&gt;3)-[beta-D-Gal-(1-&gt;4)-beta-D-GlcNAc-(1-&gt;2)-alpha-D-Man-(1-&gt;6)]-beta-D-Man-(1-&gt;4)-beta-D-GlcNAc-(1-&gt;4)-beta-D-GlcNAc}-L-asparaginyl-[protein] + UDP-N-acetyl-alpha-D-glucosamine = an N(4)-{beta-D-GlcNAc-(1-&gt;2)-[beta-D-GlcNAc-(1-&gt;4)]-alpha-D-Man-(1-&gt;3)-[beta-D-Gal-(1-&gt;4)-beta-D-GlcNAc-(1-&gt;2)-alpha-D-Man-(1-&gt;6)]-beta-D-Man-(1-&gt;4)-beta-D-GlcNAc-(1-&gt;4)-beta-D-GlcNAc}-L-asparaginyl-[protein] + UDP + H(+). It catalyses the reaction N(4)-{beta-D-GlcNAc-(1-&gt;2)-alpha-D-Man-(1-&gt;3)-[alpha-D-Man-(1-&gt;3)-{alpha-D-Man-(1-&gt;6)}-alpha-D-Man-(1-&gt;6)]-beta-D-Man-(1-&gt;4)-beta-D-GlcNAc-(1-&gt;4)-beta-D-GlcNAc}-asparaginyl-[protein] + UDP-N-acetyl-alpha-D-glucosamine = N(4)-{beta-D-GlcNAc-(1-&gt;2)-[beta-D-GlcNAc-(1-&gt;4)]-alpha-D-Man-(1-&gt;3)-[alpha-D-Man-(1-&gt;3)-{alpha-D-Man-(1-&gt;6)}-alpha-D-Man-(1-&gt;6)]-beta-D-Man-(1-&gt;4)-beta-D-GlcNAc-(1-&gt;4)-beta-D-GlcNAc}-asparaginyl-[protein] + UDP + H(+). The catalysed reaction is N(4)-{beta-D-GlcNAc-(1-&gt;2)-alpha-D-Man-(1-&gt;3)-beta-D-Man-(1-&gt;4)-beta-D-GlcNAc-(1-&gt;4)-beta-D-GlcNAc}-asparaginyl-[protein] + UDP-N-acetyl-alpha-D-glucosamine = N(4)-{beta-D-GlcNAc-(1-&gt;2)-[beta-D-GlcNAc-(1-&gt;4)]-alpha-D-Man-(1-&gt;3)-beta-D-Man-(1-&gt;4)-beta-D-GlcNAc-(1-&gt;4)-beta-D-GlcNAc}-asparaginyl-[protein] + UDP + H(+). The protein operates within protein modification; protein glycosylation. Functionally, glycosyltransferase that catalyzes the transfer of GlcNAc from UDP-GlcNAc to the GlcNAcbeta1-2Manalpha1-3 arm of the core structure of N-linked glycans through a beta1-4 linkage and participates in the production of tri- and tetra-antennary N-linked sugar chains. Prefers complex-type N-glycans over hybrid-types. Has lower affinities for donors or acceptors than MGAT4A, suggesting that, under physiological conditions, it is not the main contributor in N-glycan biosynthesis. The protein is Alpha-1,3-mannosyl-glycoprotein 4-beta-N-acetylglucosaminyltransferase B of Homo sapiens (Human).